A 466-amino-acid chain; its full sequence is Rho GTPase-activating protein 1 (466 aa).

2 disordered regions span residues methionine 1–tyrosine 31 and glutamate 65–glycine 84. The segment covering proline 8–tyrosine 31 has biased composition (low complexity). A compositionally biased stretch (basic and acidic residues) spans glutamate 65–serine 74. One can recognise a CRIB domain in the interval isoleucine 117–threonine 130. The region spanning valine 162 to arginine 342 is the Rho-GAP domain. The tract at residues proline 354 to leucine 402 is disordered. Composition is skewed to polar residues over residues histidine 363–glutamate 376 and serine 383–glutamate 397.

In terms of biological role, acts as a GTPase activator for the Rac-type GTPase by converting it to an inactive GDP-bound state. In Arabidopsis thaliana (Mouse-ear cress), this protein is Rho GTPase-activating protein 1 (ROPGAP1).